The following is an 838-amino-acid chain: Probable bifunctional folylpolyglutamate synthase/dihydropteroate synthase (838 aa).

The interval 1 to 418 (MEYHEAVNFL…LVVGSLYVVA (418 aa)) is folylpolyglutamate synthase. 46–52 (GSNGKGS) lines the ATP pocket. The disordered stretch occupies residues 541-561 (AADAGEDDERGAGDASDAGHD). One can recognise a Pterin-binding domain in the interval 569–819 (TAVMGILNVT…DVPENVAAVN (251 aa)). Positions 571 to 838 (VMGILNVTPN…RFEADAERED (268 aa)) are DHPS. Position 576 (Asn-576) interacts with Mg(2+). Residues Thr-616, Asp-649, Asn-668, Asp-738, Lys-774, and 807-809 (RVH) each bind (7,8-dihydropterin-6-yl)methyl diphosphate.

It in the N-terminal section; belongs to the folylpolyglutamate synthase family. This sequence in the C-terminal section; belongs to the DHPS family. Mg(2+) serves as cofactor.

It carries out the reaction (6S)-5,6,7,8-tetrahydrofolyl-(gamma-L-Glu)(n) + L-glutamate + ATP = (6S)-5,6,7,8-tetrahydrofolyl-(gamma-L-Glu)(n+1) + ADP + phosphate + H(+). It catalyses the reaction (7,8-dihydropterin-6-yl)methyl diphosphate + 4-aminobenzoate = 7,8-dihydropteroate + diphosphate. It functions in the pathway cofactor biosynthesis; tetrahydrofolylpolyglutamate biosynthesis. Its pathway is cofactor biosynthesis; tetrahydrofolate biosynthesis; 7,8-dihydrofolate from 2-amino-4-hydroxy-6-hydroxymethyl-7,8-dihydropteridine diphosphate and 4-aminobenzoate: step 1/2. Its function is as follows. Can complement an H.volcanii mutant strain that is thymidine auxotroph because it lacks the two dihydrofolate reductase genes encoded by hdrA and hdrB. In Haloferax volcanii (strain ATCC 29605 / DSM 3757 / JCM 8879 / NBRC 14742 / NCIMB 2012 / VKM B-1768 / DS2) (Halobacterium volcanii), this protein is Probable bifunctional folylpolyglutamate synthase/dihydropteroate synthase (folCP).